The chain runs to 476 residues: Protein transport protein Sec61 subunit alpha isoform A (476 aa).

The Cytoplasmic portion of the chain corresponds to 2 to 33; the sequence is GIKFLEVIKPFCAVLPEIQKPERKIQFREKVL. The helical transmembrane segment at 34 to 53 threads the bilayer; the sequence is WTAITLFIFLVCCQIPLFGI. Topologically, residues 54–76 are lumenal; the sequence is MSSDSADPFYWMRVILASNRGTL. A helical transmembrane segment spans residues 77 to 96; sequence MELGISPIVTSGLIMQLLAG. Topologically, residues 97-117 are cytoplasmic; the sequence is AKIIEVGDTPKDRALFNGAQK. The helical transmembrane segment at 118–138 threads the bilayer; the sequence is LFGMIITIGQSIVYVMTGMYG. Topologically, residues 139–144 are lumenal; sequence DPSEMG. Residues 145 to 165 form a helical membrane-spanning segment; it reads AGICLLIIIQLFVAGLIVLLL. At 166–172 the chain is on the cytoplasmic side; sequence DELLQKG. The chain crosses the membrane as a helical span at residues 173–193; the sequence is YGLGSGISLFIATNICETIVW. Residues 194-240 are Lumenal-facing; the sequence is KAFSPTTVNTGRGTEFEGAIIALFHLLATRTDKVRALREAFYRQNLP. A helical transmembrane segment spans residues 241 to 261; that stretch reads NLLNLIATVFVFAVVIYFQGF. The Cytoplasmic portion of the chain corresponds to 262–288; sequence RVDLPIKSARYRGQYNTYPIKLFYTSN. The chain crosses the membrane as a helical span at residues 289–309; sequence IPIILQSALVSNLYVISQMLS. The Lumenal segment spans residues 310–354; the sequence is TRFSGNFLVNLLGTWSDTSTGGPARAYPVGGLCYFLSPPESFGSV. Residues 355-375 form a helical membrane-spanning segment; sequence LDDPIHAAIYIVFMLGSCAFF. Over 376–420 the chain is Cytoplasmic; it reads SKTWIEVSGSSAKDVAKQLKEQQMVMGGHRETSMVHELNRYIPTA. A helical membrane pass occupies residues 421–441; that stretch reads AAFGGLCIGGLSVMADFLGAI. Residues 442–445 are Lumenal-facing; sequence GSGT. The helical transmembrane segment at 446 to 462 threads the bilayer; that stretch reads GILLAVTIIYQYFEIFV. Residues 463–476 are Cytoplasmic-facing; the sequence is KEQSEMGSMGALLF.

Belongs to the SecY/SEC61-alpha family. The SEC61 channel-forming translocon complex consists of channel-forming core components SEC61A1, SEC61B and SEC61G and different auxiliary components such as SEC62 and SEC63. The SEC61 channel associates with the multi-pass translocon (MPT) complex.

It localises to the endoplasmic reticulum membrane. Functionally, component of SEC61 channel-forming translocon complex that mediates transport of signal peptide-containing precursor polypeptides across the endoplasmic reticulum (ER). Forms a ribosome receptor and a gated pore in the ER membrane, both functions required for cotranslational translocation of nascent polypeptides. May cooperate with auxiliary protein SEC62, SEC63 and HSPA5/BiP to enable post-translational transport of small presecretory proteins. The SEC61 channel is also involved in ER membrane insertion of transmembrane proteins: it mediates membrane insertion of the first few transmembrane segments of proteins, while insertion of subsequent transmembrane regions of multi-pass membrane proteins is mediated by the multi-pass translocon (MPT) complex. This Oncorhynchus mykiss (Rainbow trout) protein is Protein transport protein Sec61 subunit alpha isoform A (sec61aa).